The chain runs to 248 residues: tRNA pseudouridine synthase A (248 aa).

Aspartate 53 acts as the Nucleophile in catalysis. Residue tyrosine 111 coordinates substrate.

The protein belongs to the tRNA pseudouridine synthase TruA family. As to quaternary structure, homodimer.

It catalyses the reaction uridine(38/39/40) in tRNA = pseudouridine(38/39/40) in tRNA. Formation of pseudouridine at positions 38, 39 and 40 in the anticodon stem and loop of transfer RNAs. The protein is tRNA pseudouridine synthase A of Listeria monocytogenes serotype 4a (strain HCC23).